Here is a 114-residue protein sequence, read N- to C-terminus: Small ribosomal subunit protein bS6 (114 aa).

It belongs to the bacterial ribosomal protein bS6 family.

Functionally, binds together with bS18 to 16S ribosomal RNA. In Bacteroides fragilis (strain YCH46), this protein is Small ribosomal subunit protein bS6.